The primary structure comprises 382 residues: D-galactonate dehydratase (382 aa).

Asp-183 contributes to the Mg(2+) binding site. The active-site Proton donor is His-185. Mg(2+)-binding residues include Glu-209 and Glu-235. His-285 (proton acceptor) is an active-site residue.

The protein belongs to the mandelate racemase/muconate lactonizing enzyme family. GalD subfamily. Mg(2+) is required as a cofactor.

The catalysed reaction is D-galactonate = 2-dehydro-3-deoxy-D-galactonate + H2O. Its pathway is carbohydrate acid metabolism; D-galactonate degradation; D-glyceraldehyde 3-phosphate and pyruvate from D-galactonate: step 1/3. Catalyzes the dehydration of D-galactonate to 2-keto-3-deoxy-D-galactonate. The chain is D-galactonate dehydratase from Escherichia coli (strain UTI89 / UPEC).